A 472-amino-acid chain; its full sequence is Sporozoite surface protein P36p (472 aa).

The first 23 residues, 1-23 (MMKRRRIFMYYCFCFLLKYVAFS), serve as a signal peptide directing secretion. 5 N-linked (GlcNAc...) asparagine glycosylation sites follow: Asn-24, Asn-29, Asn-93, Asn-112, and Asn-185. 6-Cys domains lie at 24–157 (NVTN…FKKM) and 160–299 (KIKG…TSKN). 5 disulfides stabilise this stretch: Cys-64/Cys-138, Cys-81/Cys-136, Cys-164/Cys-188, Cys-202/Cys-281, and Cys-222/Cys-279. N-linked (GlcNAc...) asparagine glycans are attached at residues Asn-295, Asn-306, Asn-383, Asn-396, Asn-400, and Asn-416. The tract at residues 359–385 (KMDPSDEDESNENAHNGNRANKDANYS) is disordered. Residue Ser-449 is the site of GPI-anchor amidated serine attachment. Positions 450-472 (SSYYEVFNYFSIAFILIIHMLLW) are cleaved as a propeptide — removed in mature form.

The protein localises to the cell surface. Its subcellular location is the cell membrane. Its function is as follows. Involved in sporozoite infection of hepatocytes and replication therein. In Plasmodium berghei (strain Anka), this protein is Sporozoite surface protein P36p (P52).